The chain runs to 1324 residues: Spike glycoprotein (1324 aa).

The N-terminal stretch at 1–13 (MLFVFILFLPSCL) is a signal peptide. The Extracellular portion of the chain corresponds to 14–1265 (GYIGDFRCIQ…GTYEMYVKWP (1252 aa)). Positions 15 to 296 (YIGDFRCIQL…SYTSEIKCKT (282 aa)) constitute a BetaCoV S1-NTD domain. Residues 17–330 (GDFRCIQLVN…RRVANLPACN (314 aa)) are receptor binding site. 5 disulfides stabilise this stretch: cysteine 21–cysteine 158, cysteine 153–cysteine 187, cysteine 165–cysteine 246, cysteine 284–cysteine 294, and cysteine 329–cysteine 354. 2 N-linked (GlcNAc...) asparagine; by host glycosylation sites follow: asparagine 31 and asparagine 60. Asparagine 192 is a glycosylation site (N-linked (GlcNAc...) asparagine; by host). Residues 327–566 (PACNIEEWLT…GINSGTTCST (240 aa)) enclose the BetaCoV S1-CTD domain. N-linked (GlcNAc...) asparagine; by host glycosylation occurs at asparagine 357. Disulfide bonds link cysteine 372–cysteine 425 and cysteine 384–cysteine 564. Residues asparagine 435, asparagine 530, asparagine 625, asparagine 657, asparagine 665, asparagine 688, asparagine 737, and asparagine 754 are each glycosylated (N-linked (GlcNAc...) asparagine; by host). Fusion peptide stretches follow at residues 870–891 (SAIE…VEAY) and 889–909 (EAYN…VQSF). The N-linked (GlcNAc...) asparagine; by host glycan is linked to asparagine 893. Cysteines 894 and 905 form a disulfide. The interval 970–1020 (QKMIASAFNNALGAIQDGFDATNSALGKIQSVVNANAEALNNLLNQLSNRF) is heptad repeat 1. Positions 999–1043 (QSVVNANAEALNNLLNQLSNRFGAISASLQEILTRLEAVEAKAQI) form a coiled coil. Residues asparagine 1180, asparagine 1190, asparagine 1209, asparagine 1225, and asparagine 1246 are each glycosylated (N-linked (GlcNAc...) asparagine; by host). Residues 1214 to 1254 (APDLSLDFEKLNVTLLDLTYEMNRIQDAIKKLNESYINLKE) form a heptad repeat 2 region. The stretch at 1227-1255 (TLLDLTYEMNRIQDAIKKLNESYINLKEV) forms a coiled coil. The helical transmembrane segment at 1266-1286 (WYVWLLIGLAGVAVCVLLFFI) threads the bilayer. Topologically, residues 1287–1324 (CCCTGCGSCCFKKCGNCCDEYGGHQDSIVIHNISSHED) are cytoplasmic. A KxHxx motif is present at residues 1320–1324 (SSHED).

This sequence belongs to the betacoronaviruses spike protein family. In terms of assembly, homotrimer; each monomer consists of a S1 and a S2 subunit. The resulting peplomers protrude from the virus surface as spikes. Cytoplasmic tail interacts with M protein. S1 interacts with murine CEACAM1, and weakly with murine CEACAM2 in tissue culture. Specific enzymatic cleavages in vivo yield mature proteins. The precursor is processed into S1 and S2 by host cell furin or another cellular protease to yield the mature S1 and S2 proteins. Additionally, a second cleavage leads to the release of a fusion peptide after viral attachment to host cell receptor. In terms of processing, the cytoplasmic Cys-rich domain is palmitoylated. Spike glycoprotein is digested within host endosomes.

The protein resides in the virion membrane. The protein localises to the host endoplasmic reticulum-Golgi intermediate compartment membrane. It is found in the host cell membrane. Functionally, attaches the virion to the cell membrane by interacting with host receptor, initiating the infection. Interacts with murine CEACAM1 to mediate viral entry. Mediates fusion of the virion and cellular membranes by acting as a class I viral fusion protein. Under the current model, the protein has at least three conformational states: pre-fusion native state, pre-hairpin intermediate state, and post-fusion hairpin state. During viral and target cell membrane fusion, the coiled coil regions (heptad repeats) assume a trimer-of-hairpins structure, positioning the fusion peptide in close proximity to the C-terminal region of the ectodomain. The formation of this structure appears to drive apposition and subsequent fusion of viral and target cell membranes. Its function is as follows. Acts as a viral fusion peptide which is unmasked following S2 cleavage occurring upon virus endocytosis. This Murine coronavirus (strain A59) (MHV-A59) protein is Spike glycoprotein.